The following is a 429-amino-acid chain: Serine/threonine-protein kinase BGLF4 (429 aa).

The segment at 1 to 27 is disordered; sequence MDVNMAAELSPTNSSSSGELSVSPEPP. The 409-residue stretch at 1–409 folds into the Protein kinase domain; that stretch reads MDVNMAAELS…CRPRFEHPHL (409 aa). Positions 14-23 are enriched in low complexity; it reads SSSSGELSVS. Residues 36-40 are SUMO interaction motif; the sequence is KVTVI. ATP contacts are provided by residues 110-118 and Glu128; that span reads LYHELMVCD. Asp195 serves as the catalytic Proton acceptor. The SUMO interaction motif stretch occupies residues 344-350; it reads VVLLEVL.

It belongs to the protein kinase superfamily. Ser/Thr protein kinase family. Interacts with host NUP62 and NUP153; this interaction plays a role in nuclear targeting of BGLF4. Interacts with host SUMO1 and SUMO2.

It localises to the virion tegument. The protein localises to the host nucleus. It catalyses the reaction L-seryl-[protein] + ATP = O-phospho-L-seryl-[protein] + ADP + H(+). The enzyme catalyses L-threonyl-[protein] + ATP = O-phospho-L-threonyl-[protein] + ADP + H(+). In terms of biological role, plays many key roles by phosphorylating several proteins including the viral DNA processivity factor BMRF1, EBNA1 or EBNA2. Modifies the host nuclear envelope structure and induces the redistribution of nuclear envelope-associated proteins by phosphorylating host nucleoporins. Subsequently, promotes the nuclear transport of EBV lytic proteins. Required for efficient lytic DNA replication and release of nucleocapsids from the nucleus. Contributes to the compaction of host cell chromatin in cells undergoing lytic replication, presumably by phosphorylating the host condensin complex and host TOP2A. Induces disassembly of the nuclear lamina by phosphorylating with host LMNA. Phosphorylates substrates involved in capsid assembly and DNA packaging. Facilitates the switch from latent to lytic DNA replication by down-regulating EBNA1 replication function. Phosphorylates the viral immediate-early protein BZLF1 and inhibits its sumoylation by interacting with host SUMO1 and SUMO2. Phosphorylates also host SAMHD1 and thereby counteracts its antiviral effect by reducing its dNTP hydrolase activity. The chain is Serine/threonine-protein kinase BGLF4 from Epstein-Barr virus (strain AG876) (HHV-4).